A 177-amino-acid chain; its full sequence is Ribosome maturation factor RimM (177 aa).

In terms of domain architecture, PRC barrel spans Asp-104–Leu-176.

It belongs to the RimM family. As to quaternary structure, binds ribosomal protein uS19.

Its subcellular location is the cytoplasm. In terms of biological role, an accessory protein needed during the final step in the assembly of 30S ribosomal subunit, possibly for assembly of the head region. Essential for efficient processing of 16S rRNA. May be needed both before and after RbfA during the maturation of 16S rRNA. It has affinity for free ribosomal 30S subunits but not for 70S ribosomes. The polypeptide is Ribosome maturation factor RimM (Fervidobacterium nodosum (strain ATCC 35602 / DSM 5306 / Rt17-B1)).